Here is a 648-residue protein sequence, read N- to C-terminus: MHSILRSSLSSREALRMRQLKGLRKERPGRHPLGVRLRAIWTSFLFPNPPHSGGKLRASTAAVEEHQEWSMDLPEGQAGGPTAQMYLWEQPEEASSRPLLSLEEQILNSTFEACDPHKTGTVTVAHLLAYLEAVTGQGPQDVRLQTLARSLDPYGEGAGATVELDTFLVVMRDWIAACQLQGGLERAEETAYEGALASPHLPSVCPEAEESANLESFGGEDPRPEGPATAELLSNLEDLELSNRRLAGENAKLQRSVETAEEGSARLGEEITALRKQLRSTQQALQVAKALDEELEDLKTLAKSLEEQNRSLMAQARHTEKEQQHLAAEVETLQEENEKLLAERDGVKRRSEELATEKDALKRQLCECERLICQREAVLSERTRHAESLARTLEEYRTTTQELRQEISNLEEQLSQSQEGPEELLEGAEAGRVGWIMALPPSLDLEIQAIRQEQDVASAGLSSPLYGVWQWEEVEPEPEPEPEPEPEPEPQEVEFPSEDPARQQTDLQREPVRALEGSRAPCLRLSRSQEEEEEEEESWVLADPSSPLGTYHHKLAPGSSRESCHIVPEMHQALMPVVRDLVPVERSRTQHCLHPQHSPGIRISQHPLVPTPVLGLLLLLLLSILLFSQSPPPTWPHLQLYYLQPPPV.

Residues 1–606 (MHSILRSSLS…HSPGIRISQH (606 aa)) lie on the Cytoplasmic side of the membrane. The tract at residues 206–228 (PEAEESANLESFGGEDPRPEGPA) is disordered. Residues 230 to 420 (AELLSNLEDL…EEQLSQSQEG (191 aa)) are a coiled coil. Over residues 473 to 497 (EVEPEPEPEPEPEPEPEPQEVEFPS) the composition is skewed to acidic residues. The interval 473–545 (EVEPEPEPEP…EESWVLADPS (73 aa)) is disordered. A helical; Anchor for type IV membrane protein membrane pass occupies residues 607-627 (PLVPTPVLGLLLLLLLSILLF). The Perinuclear space segment spans residues 628 to 648 (SQSPPPTWPHLQLYYLQPPPV).

In terms of assembly, core component the LINC complex which is composed of inner nuclear membrane SUN domain-containing proteins coupled to outer nuclear membrane KASH domain-containing nesprins. SUN and KASH domain-containing proteins seem to bind each other promiscuously; however, differentially expression of LINC complex constituents is giving rise to specific assemblies. At least SUN1/2-containing core LINC complexes are proposed to be hexameric composed of three protomers of each KASH and SUN domain-containing protein. Interacts with SUN1; this interaction mediates its telomere localization by forming a SUN1:KASH5 LINC complex. Component of a probable SUN2:KASH5 LINC complex. Self-associates. Interacts with DYNC1H1, DCTN1, DYNC1I1/2 and PAFAH1B1; suggesting the association with the dynein-dynactin motor complex. As to expression, restricted to the testis and the early ootidogenesis ovary. Expressed in spermatocytes and oocytes (at protein level).

The protein localises to the nucleus outer membrane. The protein resides in the nucleus. It localises to the chromosome. Its subcellular location is the telomere. It is found in the nucleus envelope. Its function is as follows. As a component of the LINC (LInker of Nucleoskeleton and Cytoskeleton) complex, involved in the connection between the nuclear lamina and the cytoskeleton. The nucleocytoplasmic interactions established by the LINC complex play an important role in the transmission of mechanical forces across the nuclear envelope and in nuclear movement and positioning. Required for telomere attachment to nuclear envelope in the prophase of meiosis and for rapid telomere prophase movements implicating a SUN1/2:KASH5 LINC complex in which SUN1 and SUN2 seem to act at least partial redundantly. Required for homolog pairing during meiotic prophase in spermatocytes and probably oocytes. Essential for male and female gametogenesis. Recruits cytoplasmic dynein to telomere attachment sites at the nuclear envelope in spermatocytes. In oocytes is involved in meiotic resumption and spindle formation. The polypeptide is Protein KASH5 (Mus musculus (Mouse)).